Reading from the N-terminus, the 470-residue chain is Cell division protein FtsA (470 aa).

Residues 416–470 (NKKDTHENEVESTDEEIYQSEDNHQEHKQNHEHVQDKDKDKEESKFKKLMKSLFE) form a disordered region. Over residues 425 to 434 (VESTDEEIYQ) the composition is skewed to acidic residues. Residues 436–461 (EDNHQEHKQNHEHVQDKDKDKEESKF) show a composition bias toward basic and acidic residues.

This sequence belongs to the FtsA/MreB family. In terms of assembly, self-interacts. Interacts with FtsZ.

It localises to the cell membrane. In terms of biological role, cell division protein that is involved in the assembly of the Z ring. May serve as a membrane anchor for the Z ring. This chain is Cell division protein FtsA, found in Staphylococcus aureus (strain NCTC 8325 / PS 47).